The following is a 492-amino-acid chain: Fascin-2 (492 aa).

This sequence belongs to the fascin family. Localized specifically in the outer and inner segments of the photoreceptor cells in the retina.

Its subcellular location is the cytoplasm. It localises to the cytoskeleton. It is found in the cell projection. The protein localises to the stereocilium. In terms of biological role, acts as an actin bundling protein. May play a pivotal role in photoreceptor cell-specific events, such as disk morphogenesis. The protein is Fascin-2 (FSCN2) of Homo sapiens (Human).